A 361-amino-acid polypeptide reads, in one-letter code: Phosphoserine aminotransferase (361 aa).

Residues S9 and R42 each contribute to the L-glutamate site. Pyridoxal 5'-phosphate is bound by residues 76–77 (AR), W103, T153, D173, and Q196. Position 197 is an N6-(pyridoxal phosphate)lysine (K197). 238 to 239 (NT) serves as a coordination point for pyridoxal 5'-phosphate.

It belongs to the class-V pyridoxal-phosphate-dependent aminotransferase family. SerC subfamily. As to quaternary structure, homodimer. Requires pyridoxal 5'-phosphate as cofactor.

The protein localises to the cytoplasm. The catalysed reaction is O-phospho-L-serine + 2-oxoglutarate = 3-phosphooxypyruvate + L-glutamate. It catalyses the reaction 4-(phosphooxy)-L-threonine + 2-oxoglutarate = (R)-3-hydroxy-2-oxo-4-phosphooxybutanoate + L-glutamate. It participates in amino-acid biosynthesis; L-serine biosynthesis; L-serine from 3-phospho-D-glycerate: step 2/3. Its pathway is cofactor biosynthesis; pyridoxine 5'-phosphate biosynthesis; pyridoxine 5'-phosphate from D-erythrose 4-phosphate: step 3/5. In terms of biological role, catalyzes the reversible conversion of 3-phosphohydroxypyruvate to phosphoserine and of 3-hydroxy-2-oxo-4-phosphonooxybutanoate to phosphohydroxythreonine. The chain is Phosphoserine aminotransferase from Wigglesworthia glossinidia brevipalpis.